Consider the following 210-residue polypeptide: Peptidyl-tRNA hydrolase (210 aa).

Residue Y14 participates in tRNA binding. H19 (proton acceptor) is an active-site residue. Residues F64, N66, and N112 each contribute to the tRNA site.

It belongs to the PTH family. As to quaternary structure, monomer.

The protein localises to the cytoplasm. The enzyme catalyses an N-acyl-L-alpha-aminoacyl-tRNA + H2O = an N-acyl-L-amino acid + a tRNA + H(+). Its function is as follows. Hydrolyzes ribosome-free peptidyl-tRNAs (with 1 or more amino acids incorporated), which drop off the ribosome during protein synthesis, or as a result of ribosome stalling. In terms of biological role, catalyzes the release of premature peptidyl moieties from peptidyl-tRNA molecules trapped in stalled 50S ribosomal subunits, and thus maintains levels of free tRNAs and 50S ribosomes. In Methylorubrum extorquens (strain CM4 / NCIMB 13688) (Methylobacterium extorquens), this protein is Peptidyl-tRNA hydrolase.